The sequence spans 216 residues: MKYLKIYVLRSRLLKDGNLAFFKVKNLQFFDKNFFVTEIRRYLLLDLESWNITNVMFFVTNNLKNTSTFHVVHNFLGLEELKQSLLEITKKFKLLRFKLCSKSYQGNKFFAVLNAFEVKDFLSGDIIFPPHLKLLNSRELLFTKISFNITLKILLKIEAKKASFQKPIKRLNLIIEKDEFFDNYMIFDLTTDGSVTPFNAFIKALQSSNLVTLTNA.

This sequence belongs to the RNA polymerase alpha chain family. In plastids the minimal PEP RNA polymerase catalytic core is composed of four subunits: alpha, beta, beta', and beta''. When a (nuclear-encoded) sigma factor is associated with the core the holoenzyme is formed, which can initiate transcription.

It is found in the plastid. It localises to the chloroplast. The enzyme catalyses RNA(n) + a ribonucleoside 5'-triphosphate = RNA(n+1) + diphosphate. Functionally, DNA-dependent RNA polymerase catalyzes the transcription of DNA into RNA using the four ribonucleoside triphosphates as substrates. This Euglena gracilis protein is DNA-directed RNA polymerase subunit alpha (rpoA).